The chain runs to 488 residues: 3-octaprenyl-4-hydroxybenzoate carboxy-lyase (488 aa).

Residue Asn172 coordinates Mn(2+). Residues 175-177 (IYR), 189-191 (RWL), and 194-195 (RG) each bind prenylated FMN. Glu238 provides a ligand contact to Mn(2+). The active-site Proton donor is Asp287.

This sequence belongs to the UbiD family. In terms of assembly, homohexamer. It depends on prenylated FMN as a cofactor. Mn(2+) is required as a cofactor.

Its subcellular location is the cell membrane. It catalyses the reaction a 4-hydroxy-3-(all-trans-polyprenyl)benzoate + H(+) = a 2-(all-trans-polyprenyl)phenol + CO2. The protein operates within cofactor biosynthesis; ubiquinone biosynthesis. Functionally, catalyzes the decarboxylation of 3-octaprenyl-4-hydroxy benzoate to 2-octaprenylphenol, an intermediate step in ubiquinone biosynthesis. In Shewanella oneidensis (strain ATCC 700550 / JCM 31522 / CIP 106686 / LMG 19005 / NCIMB 14063 / MR-1), this protein is 3-octaprenyl-4-hydroxybenzoate carboxy-lyase.